The primary structure comprises 343 residues: MDLSPRHRSILKALVEEFVSDNKPVGSKTLSEKYDIGLSPATIRSCLAELEDMGFIVARHTSGGRVPTERGYRLYVDSLVTLFELTMREKQRIQEEYLRMQFRLDQVLIATSKVLASLSQSASVVLGPEGSLDTLKHIELIHVNGGEVLMILVMRSGTVLNRNIFFDFHISQETLYQISRYLNDNVKGFDVHEIQSNLIPQMMLKKEGPEGFTLFAPSIARAMGTDSHSVDNLYIDGLKNLYENFKDEEEQLENILHLFDEKQFLKEFFSDYVPMDGVYTIIGKDGNEKLGGVTIITTNYRMGEKRIGSMGIIGPQRMNYNKALPLIEFTSKLVSEMITKLSR.

It belongs to the HrcA family.

Its function is as follows. Negative regulator of class I heat shock genes (grpE-dnaK-dnaJ and groELS operons). Prevents heat-shock induction of these operons. This is Heat-inducible transcription repressor HrcA from Leptospira biflexa serovar Patoc (strain Patoc 1 / Ames).